Reading from the N-terminus, the 122-residue chain is Large ribosomal subunit protein uL14 (122 aa).

Belongs to the universal ribosomal protein uL14 family. Part of the 50S ribosomal subunit. Forms a cluster with proteins L3 and L19. In the 70S ribosome, L14 and L19 interact and together make contacts with the 16S rRNA in bridges B5 and B8.

Binds to 23S rRNA. Forms part of two intersubunit bridges in the 70S ribosome. This is Large ribosomal subunit protein uL14 from Mycobacterium marinum (strain ATCC BAA-535 / M).